Reading from the N-terminus, the 102-residue chain is Large ribosomal subunit protein bL21 (102 aa).

The protein belongs to the bacterial ribosomal protein bL21 family. As to quaternary structure, part of the 50S ribosomal subunit. Contacts protein L20.

Its function is as follows. This protein binds to 23S rRNA in the presence of protein L20. This chain is Large ribosomal subunit protein bL21, found in Geotalea uraniireducens (strain Rf4) (Geobacter uraniireducens).